The sequence spans 60 residues: Large ribosomal subunit protein bL32 (60 aa).

It belongs to the bacterial ribosomal protein bL32 family.

This is Large ribosomal subunit protein bL32 from Streptococcus sanguinis (strain SK36).